A 207-amino-acid chain; its full sequence is Guanylate kinase (207 aa).

Residues 4–184 form the Guanylate kinase-like domain; it reads GTLYIVSAPS…ALLDLKTIIR (181 aa). Position 11–18 (11–18) interacts with ATP; it reads APSGAGKS.

The protein belongs to the guanylate kinase family.

Its subcellular location is the cytoplasm. It catalyses the reaction GMP + ATP = GDP + ADP. Essential for recycling GMP and indirectly, cGMP. In Sodalis glossinidius (strain morsitans), this protein is Guanylate kinase.